The primary structure comprises 492 residues: Membrane-bound lytic murein transglycosylase F (492 aa).

The signal sequence occupies residues 1–18 (MKGLFLRIIAIVALLLWA). Residues 19 to 268 (IDMVFPWQQI…RIEEKYFNHL (250 aa)) are non-LT domain. Residues 270–492 (QFDYVDTRSY…DTLATTVTTQ (223 aa)) form an LT domain region. The active site involves glutamate 313.

This sequence in the N-terminal section; belongs to the bacterial solute-binding protein 3 family. In the C-terminal section; belongs to the transglycosylase Slt family.

The protein localises to the cell outer membrane. It catalyses the reaction Exolytic cleavage of the (1-&gt;4)-beta-glycosidic linkage between N-acetylmuramic acid (MurNAc) and N-acetylglucosamine (GlcNAc) residues in peptidoglycan, from either the reducing or the non-reducing ends of the peptidoglycan chains, with concomitant formation of a 1,6-anhydrobond in the MurNAc residue.. Its function is as follows. Murein-degrading enzyme that degrades murein glycan strands and insoluble, high-molecular weight murein sacculi, with the concomitant formation of a 1,6-anhydromuramoyl product. Lytic transglycosylases (LTs) play an integral role in the metabolism of the peptidoglycan (PG) sacculus. Their lytic action creates space within the PG sacculus to allow for its expansion as well as for the insertion of various structures such as secretion systems and flagella. The sequence is that of Membrane-bound lytic murein transglycosylase F from Pasteurella multocida (strain Pm70).